Reading from the N-terminus, the 988-residue chain is Little elongation complex subunit 2 (988 aa).

Residue Ser322 is modified to Phosphoserine. Disordered regions lie at residues 402-422 and 500-587; these read FGVTTTSPPRSPSSESDSSAP and VEGG…PCGS. The span at 413–422 shows a compositional bias: low complexity; that stretch reads PSSESDSSAP. The span at 534 to 547 shows a compositional bias: basic and acidic residues; that stretch reads NEVHRTEGISKESD. Residues 563 to 576 are compositionally biased toward low complexity; it reads NANNPNNTATASEA. A Phosphoserine modification is found at Ser587. Thr589 is modified (phosphothreonine). Disordered stretches follow at residues 604–633, 673–706, and 942–968; these read DGKTADLGSRPNSSAQASAGNQATTTVSEE, PLTNSEESKQPPASEQPSAALDAAPWPKSSWPSA, and AAQAKVGGTRMPTRNHRNPVSMETKSS. Over residues 615 to 629 the composition is skewed to low complexity; it reads NSSAQASAGNQATTT.

The protein belongs to the ICE2 family. In terms of assembly, component of the little elongation complex (LEC), at least composed of ELL (ELL, ELL2 or ELL3), ZC3H8, ICE1 and ICE2. Interacts with ICE1 (via C-terminus domain). Interacts with ELL. Expressed in brain, kidney, liver and testis.

It is found in the nucleus. In terms of biological role, component of the little elongation complex (LEC), a complex required to regulate small nuclear RNA (snRNA) gene transcription by RNA polymerase II and III. This is Little elongation complex subunit 2 (Ice2) from Mus musculus (Mouse).